The sequence spans 211 residues: SOSS complex subunit B2 (211 aa).

The segment at residues 27–97 is a DNA-binding region (OB); sequence IVLEIGRVTK…TLYTGRGGDL (71 aa). A disordered region spans residues 125–211; sequence NQQNKTSKEQ…GRDPRRASKR (87 aa). Residues 136 to 157 show a composition bias toward polar residues; that stretch reads GNSPPNQNAGNGTVPVFSNNNA. Positions 179-195 are enriched in pro residues; that stretch reads NGPPPVTAGGTPAPPKP.

Belongs to the SOSS-B family. SOSS-B2 subfamily. In terms of assembly, component of the SOSS complex, composed of soss-b (soss-b1/nabp2 or soss-b2/nabp1), soss-a/ints3 and soss-c/inip. SOSS complexes containing soss-b1/nabp2 are more abundant than complexes containing soss-b2/nabp1.

It is found in the nucleus. Functionally, component of the SOSS complex, a multiprotein complex that functions downstream of the MRN complex to promote DNA repair and G2/M checkpoint. In the SOSS complex, acts as a sensor of single-stranded DNA that binds to single-stranded DNA. The SOSS complex associates with DNA lesions and influences diverse endpoints in the cellular DNA damage response including cell-cycle checkpoint activation, recombinational repair and maintenance of genomic stability. Required for efficient homologous recombination-dependent repair of double-strand breaks (DSBs). The chain is SOSS complex subunit B2 (nabp1) from Danio rerio (Zebrafish).